The sequence spans 310 residues: Syntaxin-81 (310 aa).

The Cytoplasmic portion of the chain corresponds to 1-289 (MSRFRDRTED…QAIQRNSSSR (289 aa)). Residues 77-114 (RTTEQEKDSIEQEVAAFIKACKEQIDILINSIRNEEAN) adopt a coiled-coil conformation. Residues 290 to 310 (TFLLLFFFVLTFSVLFLDWYS) form a helical; Anchor for type IV membrane protein membrane-spanning segment.

Belongs to the syntaxin family. As to quaternary structure, part of the t-SNARE complex. Interacts with MAG2.

The protein localises to the membrane. Its function is as follows. Vesicle trafficking protein that functions in the secretory pathway. This is Syntaxin-81 (SYP81) from Arabidopsis thaliana (Mouse-ear cress).